Reading from the N-terminus, the 278-residue chain is Phosphatidylglycerol--prolipoprotein diacylglyceryl transferase (278 aa).

Helical transmembrane passes span tryptophan 19–glycine 39, phenylalanine 49–valine 69, isoleucine 86–isoleucine 106, and methionine 112–isoleucine 132. An a 1,2-diacyl-sn-glycero-3-phospho-(1'-sn-glycerol)-binding site is contributed by arginine 134. The next 3 membrane-spanning stretches (helical) occupy residues glutamine 174 to leucine 194, glycine 204 to methionine 224, and isoleucine 235 to tyrosine 255.

This sequence belongs to the Lgt family.

It is found in the cell membrane. The catalysed reaction is L-cysteinyl-[prolipoprotein] + a 1,2-diacyl-sn-glycero-3-phospho-(1'-sn-glycerol) = an S-1,2-diacyl-sn-glyceryl-L-cysteinyl-[prolipoprotein] + sn-glycerol 1-phosphate + H(+). The protein operates within protein modification; lipoprotein biosynthesis (diacylglyceryl transfer). Its function is as follows. Catalyzes the transfer of the diacylglyceryl group from phosphatidylglycerol to the sulfhydryl group of the N-terminal cysteine of a prolipoprotein, the first step in the formation of mature lipoproteins. In Lactobacillus johnsonii (strain CNCM I-12250 / La1 / NCC 533), this protein is Phosphatidylglycerol--prolipoprotein diacylglyceryl transferase.